The primary structure comprises 251 residues: MLNLLYNQIFNVILNDVPTPYNTYFQDSATPNQEGILELHDNIMFYLLVILGLVSWLLFTITRTYSKNPIAYKYIKHGQTIEIIWTIFPAVILLIIAFPSFILLYLCDEVISPAMTIKAIGLQWYWKYEYSDFINDSGETVEFESYVIPEDLLEDGQLRLLDTDTSVVVPVDTHIRFVVTAADVIHDFAIPSLGIKVDAAPGRLNQVSALIQREGVFYGQCSELCGTAHSAMPIKIEAVSLPAFLEWLNEQ.

The N-terminal stretch at 1-15 (MLNLLYNQIFNVILN) is a signal peptide. The Mitochondrial intermembrane portion of the chain corresponds to 16–41 (DVPTPYNTYFQDSATPNQEGILELHD). Residues 42–62 (NIMFYLLVILGLVSWLLFTIT) form a helical membrane-spanning segment. Topologically, residues 63–82 (RTYSKNPIAYKYIKHGQTIE) are mitochondrial matrix. A helical membrane pass occupies residues 83–103 (IIWTIFPAVILLIIAFPSFIL). Residues 104-251 (LYLCDEVISP…PAFLEWLNEQ (148 aa)) lie on the Mitochondrial intermembrane side of the membrane. His186, Cys221, Glu223, Cys225, His229, and Met232 together coordinate Cu cation. Glu223 contacts Mg(2+).

It belongs to the cytochrome c oxidase subunit 2 family. In terms of assembly, component of the cytochrome c oxidase (complex IV, CIV), a multisubunit enzyme composed of a catalytic core of 3 subunits and several supernumerary subunits. The complex exists as a monomer or a dimer and forms supercomplexes (SCs) in the inner mitochondrial membrane with ubiquinol-cytochrome c oxidoreductase (cytochrome b-c1 complex, complex III, CIII). Cu cation is required as a cofactor. In terms of processing, the signal sequence of COX2 is processed by IMP1.

Its subcellular location is the mitochondrion inner membrane. It catalyses the reaction 4 Fe(II)-[cytochrome c] + O2 + 8 H(+)(in) = 4 Fe(III)-[cytochrome c] + 2 H2O + 4 H(+)(out). Its function is as follows. Component of the cytochrome c oxidase, the last enzyme in the mitochondrial electron transport chain which drives oxidative phosphorylation. The respiratory chain contains 3 multisubunit complexes succinate dehydrogenase (complex II, CII), ubiquinol-cytochrome c oxidoreductase (cytochrome b-c1 complex, complex III, CIII) and cytochrome c oxidase (complex IV, CIV), that cooperate to transfer electrons derived from NADH and succinate to molecular oxygen, creating an electrochemical gradient over the inner membrane that drives transmembrane transport and the ATP synthase. Cytochrome c oxidase is the component of the respiratory chain that catalyzes the reduction of oxygen to water. Electrons originating from reduced cytochrome c in the intermembrane space (IMS) are transferred via the dinuclear copper A center (CU(A)) of subunit 2 and heme A of subunit 1 to the active site in subunit 1, a binuclear center (BNC) formed by heme A3 and copper B (CU(B)). The BNC reduces molecular oxygen to 2 water molecules using 4 electrons from cytochrome c in the IMS and 4 protons from the mitochondrial matrix. In Lachancea thermotolerans (strain ATCC 56472 / CBS 6340 / NRRL Y-8284) (Yeast), this protein is Cytochrome c oxidase subunit 2 (COX2).